A 91-amino-acid chain; its full sequence is Insertion element IS1 1 protein InsA (91 aa).

Belongs to the IS1 elements InsA family.

Absolutely required for transposition of IS1. This chain is Insertion element IS1 1 protein InsA (insA1), found in Escherichia coli (strain K12).